The chain runs to 2005 residues: Structural maintenance of chromosomes flexible hinge domain-containing protein 1 (2005 aa).

Over residues 1–13 (MAAADGGGPGGAS) the composition is skewed to gly residues. Residues 1–23 (MAAADGGGPGGASVGTEEDGGGV) form a disordered region. At A2 the chain carries N-acetylalanine. The ATPase activity domain stretch occupies residues 111–702 (TKERIDFLPH…LSVTWPEGDE (592 aa)). Residue K1349 is modified to N6-acetyllysine. Residues K1374 and K1496 each participate in a glycyl lysine isopeptide (Lys-Gly) (interchain with G-Cter in SUMO2) cross-link. T1499 carries the phosphothreonine modification. The 128-residue stretch at 1720–1847 (GDVLGKIAHL…DNLDAANHYR (128 aa)) folds into the SMC hinge domain. N6-succinyllysine is present on K1802. S1974 carries the post-translational modification Phosphoserine.

The protein belongs to the SMC family. Highly divergent. Homodimer; homodimerizes via its SMC hinge domain. Interacts with LRIF1. In terms of processing, sumoylated with SUMO1.

It is found in the chromosome. The enzyme catalyses ATP + H2O = ADP + phosphate + H(+). In terms of biological role, non-canonical member of the structural maintenance of chromosomes (SMC) protein family that plays a key role in epigenetic silencing by regulating chromatin architecture. Promotes heterochromatin formation in both autosomes and chromosome X, probably by mediating the merge of chromatin compartments. Plays a key role in chromosome X inactivation in females by promoting the spreading of heterochromatin. Recruited to inactivated chromosome X by Xist RNA and acts by mediating the merge of chromatin compartments: promotes random chromatin interactions that span the boundaries of existing structures, leading to create a compartment-less architecture typical of inactivated chromosome X. Required to facilitate Xist RNA spreading. Also required for silencing of a subset of clustered autosomal loci in somatic cells, such as the DUX4 locus. Has ATPase activity; may participate in structural manipulation of chromatin in an ATP-dependent manner as part of its role in gene expression regulation. Also plays a role in DNA repair: localizes to sites of DNA double-strand breaks in response to DNA damage to promote the repair of DNA double-strand breaks. Acts by promoting non-homologous end joining (NHEJ) and inhibiting homologous recombination (HR) repair. The sequence is that of Structural maintenance of chromosomes flexible hinge domain-containing protein 1 from Homo sapiens (Human).